The following is a 35-amino-acid chain: Potassium channel toxin alpha-KTx 23.2 (35 aa).

Disulfide bonds link C6-C26, C12-C31, and C16-C33.

Belongs to the short scorpion toxin superfamily. Potassium channel inhibitor family. Alpha-KTx 23 subfamily. As to expression, expressed by the venom gland.

It localises to the secreted. Its function is as follows. Selectively and irreversibly binds (K(d)=2.9 pM) and blocks Kv1.3/KCNA3 potassium channels of human T-lymphocytes. Weakly blocks Kv1.2/KCNA2 (9%). In Vaejovis mexicanus smithi (Mexican scorpion), this protein is Potassium channel toxin alpha-KTx 23.2.